A 283-amino-acid chain; its full sequence is Probable protein phosphatase 2C 17 (283 aa).

The 251-residue stretch at 32-282 (KYGFSLIKGK…DDISCIVVRF (251 aa)) folds into the PPM-type phosphatase domain. Residues Asp69, Gly70, Asp234, and Asp273 each contribute to the Mn(2+) site.

It belongs to the PP2C family. Requires Mg(2+) as cofactor. It depends on Mn(2+) as a cofactor.

It catalyses the reaction O-phospho-L-seryl-[protein] + H2O = L-seryl-[protein] + phosphate. It carries out the reaction O-phospho-L-threonyl-[protein] + H2O = L-threonyl-[protein] + phosphate. The sequence is that of Probable protein phosphatase 2C 17 from Arabidopsis thaliana (Mouse-ear cress).